A 49-amino-acid polypeptide reads, in one-letter code: Large ribosomal subunit protein bL33 (49 aa).

This sequence belongs to the bacterial ribosomal protein bL33 family.

This is Large ribosomal subunit protein bL33 from Clostridium acetobutylicum (strain ATCC 824 / DSM 792 / JCM 1419 / IAM 19013 / LMG 5710 / NBRC 13948 / NRRL B-527 / VKM B-1787 / 2291 / W).